Here is a 135-residue protein sequence, read N- to C-terminus: Large ribosomal subunit protein mL41A (135 aa).

The transit peptide at 1–13 (MGLISKIARGLVR) directs the protein to the mitochondrion.

Belongs to the mitochondrion-specific ribosomal protein mL41 family. As to quaternary structure, component of the mitochondrial ribosome large subunit (39S) which comprises a 16S rRNA and about 50 distinct proteins.

It is found in the mitochondrion. Component of the mitochondrial ribosome large subunit. Also involved in apoptosis and cell cycle. This is Large ribosomal subunit protein mL41A (mrpl41-a) from Xenopus laevis (African clawed frog).